Reading from the N-terminus, the 551-residue chain is MCDMGGLDNLIANTAYLQARKNSEGDVKELQKRRKSLSLPSTDVSRKEIKETITLDYQSICVEQPIGQRLFRDFLGTVSEYKLAEEFLEEVKEWELEEGSAKEQLMEKLVSRRFKEPAEGSLNFLGKDLSSRIQQAQSKDMPELILLAKDAGNAFLMDAPFQDFQNSPFYDRFLQWKAFERQPINQKYFYEFRILGKGGFGEVCAIQVKNTGQMYACKKLDKKRLKKKNGEKMALLEKEILEKVHSPFIVSLAYAYETKTHLCLVMSLMNGGDLKFHIYNIGEKGIEIKRVIFYSAQICCGILHLHSLKILYRDMKPENVLLDDNGNCRLSDLGLAVKVKEGKPITQRAGTNGYMAPEILTDVDYSYPVDWFAMGCSIYEMIAGHTPFRDPKEKTSKEEVKRKTIEDEVVFQHPVFTEEAKDICRLFLAKKPQNRLGSRTNDDDPRKHAFFKSINFQRLEAGMVDPPFVPDPSVVYAKDISDIADFSEVKGIEFDDKDSKFFKRFATGAIPISWQKEIIDTGLFDELNDPSREATGGGGNSGEKSGVCSIL.

S36 bears the Phosphoserine mark. The RGS domain maps to Y57–L174. In terms of domain architecture, Protein kinase spans F189 to F451. Residues L195–V203 and K218 each bind ATP. The active-site Proton acceptor is D314. The region spanning K452–E517 is the AGC-kinase C-terminal domain. A Phosphoserine modification is found at S487. Residues D529–L551 are disordered. Low complexity predominate over residues G542 to L551. C548 carries the cysteine methyl ester modification. A lipid anchor (S-geranylgeranyl cysteine) is attached at C548. Positions S549–L551 are cleaved as a propeptide — removed in mature form.

Belongs to the protein kinase superfamily. AGC Ser/Thr protein kinase family. GPRK subfamily. In terms of processing, autophosphorylated in vitro at Ser-487. Phosphorylation at Ser-36 is regulated by light and activated by cAMP.

Its subcellular location is the membrane. It carries out the reaction L-threonyl-[rhodopsin] + ATP = O-phospho-L-threonyl-[rhodopsin] + ADP + H(+). The enzyme catalyses L-seryl-[rhodopsin] + ATP = O-phospho-L-seryl-[rhodopsin] + ADP + H(+). Retina-specific kinase involved in the shutoff of the photoresponse and adaptation to changing light conditions via cone opsin phosphorylation, including rhodopsin (RHO). This chain is Rhodopsin kinase grk7-a (grk7-a), found in Xenopus laevis (African clawed frog).